A 541-amino-acid polypeptide reads, in one-letter code: Chaperonin GroEL (541 aa).

Residues 30-33, Lys51, 87-91, Gly415, and Asp495 each bind ATP; these read TLGP and DGTTT.

Belongs to the chaperonin (HSP60) family. In terms of assembly, forms a cylinder of 14 subunits composed of two heptameric rings stacked back-to-back. Interacts with the co-chaperonin GroES.

It localises to the cytoplasm. The enzyme catalyses ATP + H2O + a folded polypeptide = ADP + phosphate + an unfolded polypeptide.. Together with its co-chaperonin GroES, plays an essential role in assisting protein folding. The GroEL-GroES system forms a nano-cage that allows encapsulation of the non-native substrate proteins and provides a physical environment optimized to promote and accelerate protein folding. This is Chaperonin GroEL from Pantoea ananas (Erwinia uredovora).